The primary structure comprises 157 residues: Transcriptional repressor NrdR (157 aa).

The segment at 3 to 34 (CPFCRHPDSRVVDSRTSDDGLSIRRRRQCPEC) is a zinc-finger region. In terms of domain architecture, ATP-cone spans 46–136 (LSVIKRNGVV…VYQGFDSLDD (91 aa)).

Belongs to the NrdR family. Requires Zn(2+) as cofactor.

Functionally, negatively regulates transcription of bacterial ribonucleotide reductase nrd genes and operons by binding to NrdR-boxes. In Clavibacter michiganensis subsp. michiganensis (strain NCPPB 382), this protein is Transcriptional repressor NrdR.